The following is a 310-amino-acid chain: Membrane protein insertase YidC 2 (310 aa).

The N-terminal stretch at 1–23 (MKKTLKRILFSSLSLSILLLLTG) is a signal peptide. Residue Cys24 is the site of N-palmitoyl cysteine attachment. Cys24 carries the S-diacylglycerol cysteine lipid modification. Transmembrane regions (helical) follow at residues 33–53 (PYGV…TYFA), 58–78 (LGFG…ILPL), 135–155 (FGGI…AIFF), 180–200 (LTVI…QGVP), and 219–239 (VFMS…GGIF). The tract at residues 262-310 (EYTKNPPKAYKSNNARKDVTSSTKTTESNQAIITSKKTNRNAGKQKRRG) is disordered. Residues 281 to 297 (TSSTKTTESNQAIITSK) show a composition bias toward polar residues. The segment covering 298–310 (KTNRNAGKQKRRG) has biased composition (basic residues).

This sequence belongs to the OXA1/ALB3/YidC family. Type 2 subfamily.

It is found in the cell membrane. Its function is as follows. Required for the insertion and/or proper folding and/or complex formation of integral membrane proteins into the membrane. Involved in integration of membrane proteins that insert both dependently and independently of the Sec translocase complex, as well as at least some lipoproteins. In Streptococcus agalactiae serotype III (strain NEM316), this protein is Membrane protein insertase YidC 2.